A 111-amino-acid chain; its full sequence is uncharacterized protein (111 aa).

This is an uncharacterized protein from Methanocaldococcus jannaschii (strain ATCC 43067 / DSM 2661 / JAL-1 / JCM 10045 / NBRC 100440) (Methanococcus jannaschii).